The following is a 328-amino-acid chain: Cytochrome c biogenesis protein CcsA (328 aa).

The next 8 membrane-spanning stretches (helical) occupy residues 13-33, 46-66, 73-93, 101-121, 146-166, 234-254, 263-283, and 295-315; these read ISFS…LVNL, GIII…IFSG, LYES…VSYF, LNAI…SGLL, MILG…LLVI, IISL…VWAN, WDPK…YLHI, and AIVA…VNLL.

Belongs to the CcmF/CycK/Ccl1/NrfE/CcsA family. In terms of assembly, may interact with Ccs1.

It is found in the plastid. The protein localises to the chloroplast thylakoid membrane. Functionally, required during biogenesis of c-type cytochromes (cytochrome c6 and cytochrome f) at the step of heme attachment. This chain is Cytochrome c biogenesis protein CcsA, found in Olimarabidopsis pumila (Dwarf rocket).